Reading from the N-terminus, the 353-residue chain is UPF0283 membrane protein YcjF (353 aa).

A run of 3 helical transmembrane segments spans residues 70 to 90, 100 to 120, and 213 to 233; these read MVMG…VQWT, VALG…GSVV, and ESTL…FIAW.

The protein belongs to the UPF0283 family.

It localises to the cell inner membrane. The chain is UPF0283 membrane protein YcjF from Shigella sonnei (strain Ss046).